The primary structure comprises 746 residues: PAN2-PAN3 deadenylation complex subunit pan3 (746 aa).

Residues 7-35 (PKNQKQCKNIALHGYCRNSDKCEFSHELT) form a C3H1-type zinc finger. The segment covering 64 to 97 (QQQQQQQNSNGNGSNNTATSNNPIISPNSNIASP) has biased composition (low complexity). 3 disordered regions span residues 64 to 100 (QQQQ…PLKK), 169 to 205 (DDQH…NMNN), and 219 to 275 (NASP…PSLQ). Residues 196-205 (NNGIDPNMNN) are compositionally biased toward polar residues. The span at 221 to 275 (SPQSYQQQFQQPNPSPQSSSQQQQQQQQQQQQAVYQQQQQQQPSSQPLAQNPSLQ) shows a compositional bias: low complexity. The segment at 351-610 (DPNDPRIKNI…NIDEVVLMIS (260 aa)) is pseudokinase domain. Residues Arg407, 457–464 (EFFPGSET), and 509–510 (SK) contribute to the ATP site. The stretch at 611–649 (GRLLQENNYLHTYTDDLETELSKEYENGRLFRLVTKLGF) forms a coiled coil. The segment at 650–746 (INERPLYDMD…SELVSQKSHI (97 aa)) is knob domain.

The protein belongs to the protein kinase superfamily. PAN3 family. In terms of assembly, homodimer. Forms a heterotrimer with a catalytic subunit PAN2 to form the poly(A)-nuclease (PAN) deadenylation complex. Interacts (via PAM-2 motif) with poly(A)-binding protein (via PABC domain), conferring substrate specificity of the enzyme complex.

Its subcellular location is the cytoplasm. Its function is as follows. Regulatory subunit of the poly(A)-nuclease (PAN) deadenylation complex, one of two cytoplasmic mRNA deadenylases involved in mRNA turnover. PAN specifically shortens poly(A) tails of RNA and the activity is stimulated by poly(A)-binding protein (PABP). PAN deadenylation is followed by rapid degradation of the shortened mRNA tails by the CCR4-NOT complex. Deadenylated mRNAs are then degraded by two alternative mechanisms, namely exosome-mediated 3'-5' exonucleolytic degradation, or deadenylation-dependent mRNA decaping and subsequent 5'-3' exonucleolytic degradation by XRN1. PAN3 acts as a positive regulator for PAN activity, recruiting the catalytic subunit PAN2 to mRNA via its interaction with RNA and PABP. The polypeptide is PAN2-PAN3 deadenylation complex subunit pan3 (Dictyostelium discoideum (Social amoeba)).